Here is a 178-residue protein sequence, read N- to C-terminus: Cytochrome b6-f complex iron-sulfur subunit (178 aa).

Residues 20–42 (LLTFGTATGVALGALYPVANYFM) traverse the membrane as a helical segment. Residues 65 to 161 (KTGWLASHQA…VDVDDDAVLV (97 aa)) form the Rieske domain. Positions 107, 109, 125, and 128 each coordinate [2Fe-2S] cluster. A disulfide bond links Cys-112 and Cys-127.

The protein belongs to the Rieske iron-sulfur protein family. The 4 large subunits of the cytochrome b6-f complex are cytochrome b6, subunit IV (17 kDa polypeptide, PetD), cytochrome f and the Rieske protein, while the 4 small subunits are PetG, PetL, PetM and PetN. The complex functions as a dimer. Requires [2Fe-2S] cluster as cofactor.

The protein localises to the cellular thylakoid membrane. It carries out the reaction 2 oxidized [plastocyanin] + a plastoquinol + 2 H(+)(in) = 2 reduced [plastocyanin] + a plastoquinone + 4 H(+)(out). Functionally, component of the cytochrome b6-f complex, which mediates electron transfer between photosystem II (PSII) and photosystem I (PSI), cyclic electron flow around PSI, and state transitions. The protein is Cytochrome b6-f complex iron-sulfur subunit of Prochlorococcus marinus subsp. pastoris (strain CCMP1986 / NIES-2087 / MED4).